We begin with the raw amino-acid sequence, 449 residues long: Biotin carboxylase (449 aa).

Residues 4–448 (MIEKVLIANR…NIHYLEKMLG (445 aa)) form the Biotin carboxylation domain. ATP is bound by residues Lys-119, Lys-162, 168-169 (GG), 204-207 (EKYL), His-212, and His-239. The region spanning 123 to 320 (IAAMKAAGVP…IVKEQILIAA (198 aa)) is the ATP-grasp domain. Lys-241 contacts hydrogencarbonate. ATP contacts are provided by Glu-279 and Glu-291. 3 residues coordinate Mg(2+): Glu-279, Glu-291, and Asn-293. Residues Glu-279, Glu-291, and Asn-293 each coordinate Mn(2+). Residues Arg-295, Val-298, and Arg-341 each contribute to the hydrogencarbonate site. Arg-295 is a catalytic residue. Arg-341 is a biotin binding site.

As to quaternary structure, acetyl-CoA carboxylase is a heterohexamer of biotin carboxyl carrier protein, biotin carboxylase and the two subunits of carboxyl transferase in a 2:2 complex. The cofactor is Mg(2+). It depends on Mn(2+) as a cofactor.

The catalysed reaction is N(6)-biotinyl-L-lysyl-[protein] + hydrogencarbonate + ATP = N(6)-carboxybiotinyl-L-lysyl-[protein] + ADP + phosphate + H(+). It participates in lipid metabolism; malonyl-CoA biosynthesis; malonyl-CoA from acetyl-CoA: step 1/1. In terms of biological role, this protein is a component of the acetyl coenzyme A carboxylase complex; first, biotin carboxylase catalyzes the carboxylation of the carrier protein and then the transcarboxylase transfers the carboxyl group to form malonyl-CoA. The polypeptide is Biotin carboxylase (accC) (Allochromatium vinosum (strain ATCC 17899 / DSM 180 / NBRC 103801 / NCIMB 10441 / D) (Chromatium vinosum)).